Reading from the N-terminus, the 157-residue chain is Cytochrome b6-f complex subunit 4 (157 aa).

Transmembrane regions (helical) follow at residues 35–55, 94–114, and 130–150; these read ILYIFPVVILGTISFSLGLGV, LVGVLSLASVPVILVLTAFIE, and LVYLTSTCYALWLGYGSVLGI.

This sequence belongs to the cytochrome b family. PetD subfamily. As to quaternary structure, the 4 large subunits of the cytochrome b6-f complex are cytochrome b6, subunit IV (17 kDa polypeptide, petD), cytochrome f and the Rieske protein, while the 4 small subunits are petG, petL, petM and petN. The complex functions as a dimer.

It is found in the plastid. It localises to the chloroplast thylakoid membrane. In terms of biological role, component of the cytochrome b6-f complex, which mediates electron transfer between photosystem II (PSII) and photosystem I (PSI), cyclic electron flow around PSI, and state transitions. The sequence is that of Cytochrome b6-f complex subunit 4 from Amphidinium carterae (Dinoflagellate).